We begin with the raw amino-acid sequence, 445 residues long: Exodeoxyribonuclease 7 large subunit (445 aa).

The protein belongs to the XseA family. In terms of assembly, heterooligomer composed of large and small subunits.

It localises to the cytoplasm. The catalysed reaction is Exonucleolytic cleavage in either 5'- to 3'- or 3'- to 5'-direction to yield nucleoside 5'-phosphates.. In terms of biological role, bidirectionally degrades single-stranded DNA into large acid-insoluble oligonucleotides, which are then degraded further into small acid-soluble oligonucleotides. This is Exodeoxyribonuclease 7 large subunit from Delftia acidovorans (strain DSM 14801 / SPH-1).